We begin with the raw amino-acid sequence, 400 residues long: tRNA(Met) cytidine acetate ligase (400 aa).

ATP is bound by residues 7–20 (IVEYNPFHNGHLYH), Gly-101, Asn-159, and Arg-184.

This sequence belongs to the TmcAL family.

It localises to the cytoplasm. The enzyme catalyses cytidine(34) in elongator tRNA(Met) + acetate + ATP = N(4)-acetylcytidine(34) in elongator tRNA(Met) + AMP + diphosphate. Its function is as follows. Catalyzes the formation of N(4)-acetylcytidine (ac(4)C) at the wobble position of elongator tRNA(Met), using acetate and ATP as substrates. First activates an acetate ion to form acetyladenylate (Ac-AMP) and then transfers the acetyl group to tRNA to form ac(4)C34. The polypeptide is tRNA(Met) cytidine acetate ligase (Caldicellulosiruptor saccharolyticus (strain ATCC 43494 / DSM 8903 / Tp8T 6331)).